The sequence spans 172 residues: Protein-export protein SecB (172 aa).

Positions 153-172 (AQGQGGDSGIVMPDGSQARH) are disordered.

It belongs to the SecB family. In terms of assembly, homotetramer, a dimer of dimers. One homotetramer interacts with 1 SecA dimer.

Its subcellular location is the cytoplasm. In terms of biological role, one of the proteins required for the normal export of preproteins out of the cell cytoplasm. It is a molecular chaperone that binds to a subset of precursor proteins, maintaining them in a translocation-competent state. It also specifically binds to its receptor SecA. The polypeptide is Protein-export protein SecB (Cupriavidus metallidurans (strain ATCC 43123 / DSM 2839 / NBRC 102507 / CH34) (Ralstonia metallidurans)).